A 550-amino-acid polypeptide reads, in one-letter code: 2-succinyl-5-enolpyruvyl-6-hydroxy-3-cyclohexene-1-carboxylate synthase (550 aa).

This sequence belongs to the TPP enzyme family. MenD subfamily. Homodimer. Requires Mg(2+) as cofactor. It depends on Mn(2+) as a cofactor. Thiamine diphosphate is required as a cofactor.

It carries out the reaction isochorismate + 2-oxoglutarate + H(+) = 5-enolpyruvoyl-6-hydroxy-2-succinyl-cyclohex-3-ene-1-carboxylate + CO2. It participates in quinol/quinone metabolism; 1,4-dihydroxy-2-naphthoate biosynthesis; 1,4-dihydroxy-2-naphthoate from chorismate: step 2/7. The protein operates within quinol/quinone metabolism; menaquinone biosynthesis. Its function is as follows. Catalyzes the thiamine diphosphate-dependent decarboxylation of 2-oxoglutarate and the subsequent addition of the resulting succinic semialdehyde-thiamine pyrophosphate anion to isochorismate to yield 2-succinyl-5-enolpyruvyl-6-hydroxy-3-cyclohexene-1-carboxylate (SEPHCHC). The polypeptide is 2-succinyl-5-enolpyruvyl-6-hydroxy-3-cyclohexene-1-carboxylate synthase (Flavobacterium psychrophilum (strain ATCC 49511 / DSM 21280 / CIP 103535 / JIP02/86)).